The chain runs to 318 residues: uncharacterized protein (318 aa).

This sequence belongs to the glycosyltransferase 2 family.

This is an uncharacterized protein from Rickettsia prowazekii (strain Madrid E).